A 196-amino-acid polypeptide reads, in one-letter code: Large ribosomal subunit protein uL11m (196 aa).

This sequence belongs to the universal ribosomal protein uL11 family. Component of the mitochondrial ribosome large subunit (39S) which comprises a 16S rRNA and about 50 distinct proteins.

It localises to the mitochondrion. This chain is Large ribosomal subunit protein uL11m (mRpL11), found in Drosophila melanogaster (Fruit fly).